Reading from the N-terminus, the 284-residue chain is Quinate/shikimate dehydrogenase (NAD(+)) (284 aa).

Residues Ser18 and Thr70 each coordinate shikimate. L-quinate contacts are provided by residues 18-20 (SRT) and Thr70. The Proton acceptor role is filled by Tyr73. Lys74, Asn95, and Asp111 together coordinate shikimate. 3 residues coordinate L-quinate: Lys74, Asn95, and Asp111. NAD(+) contacts are provided by residues 137–138 (GG), Asp159, Arg164, 203–206 (TPMG), Ala214, Val229, and Gly252. Gln259 is a shikimate binding site. Gln259 is an L-quinate binding site.

It belongs to the shikimate dehydrogenase family. Homodimer.

It carries out the reaction L-quinate + NAD(+) = 3-dehydroquinate + NADH + H(+). It catalyses the reaction shikimate + NAD(+) = 3-dehydroshikimate + NADH + H(+). Its pathway is metabolic intermediate biosynthesis; chorismate biosynthesis; chorismate from D-erythrose 4-phosphate and phosphoenolpyruvate: step 4/7. It participates in aromatic compound metabolism; 3,4-dihydroxybenzoate biosynthesis; 3-dehydroquinate from D-quinate (NAD(+) route). Functionally, involved in the biosynthesis of the chorismate, which leads to the biosynthesis of aromatic amino acids, and plays a key role in the quinate degradation pathway. Catalyzes the NAD(+)-dependent oxidation of both quinate and shikimate to 3-dehydroquinate and 3-dehydroshikimate, respectively. It can only use NAD. The sequence is that of Quinate/shikimate dehydrogenase (NAD(+)) from Corynebacterium efficiens (strain DSM 44549 / YS-314 / AJ 12310 / JCM 11189 / NBRC 100395).